The primary structure comprises 329 residues: Phenylalanine--tRNA ligase alpha subunit (329 aa).

Glu253 lines the Mg(2+) pocket.

It belongs to the class-II aminoacyl-tRNA synthetase family. Phe-tRNA synthetase alpha subunit type 1 subfamily. In terms of assembly, tetramer of two alpha and two beta subunits. Mg(2+) is required as a cofactor.

The protein localises to the cytoplasm. The catalysed reaction is tRNA(Phe) + L-phenylalanine + ATP = L-phenylalanyl-tRNA(Phe) + AMP + diphosphate + H(+). The chain is Phenylalanine--tRNA ligase alpha subunit from Coxiella burnetii (strain CbuK_Q154) (Coxiella burnetii (strain Q154)).